A 177-amino-acid chain; its full sequence is Thymidine kinase (177 aa).

11–18 (GPMFSGKS) is a binding site for ATP. E83 functions as the Proton acceptor in the catalytic mechanism. F113 provides a ligand contact to substrate. Zn(2+) is bound by residues C138 and C141. 157–161 (IEIIG) is a binding site for substrate. Residues C170 and C173 each contribute to the Zn(2+) site.

The protein belongs to the thymidine kinase family. In terms of assembly, homotetramer. Two molecules of substrate bind to each enzyme tetramer.

It catalyses the reaction thymidine + ATP = dTMP + ADP + H(+). Its function is as follows. Phosphorylates thymidine and thymidine analogs, such as azidothymidine (AZT). Part of the salvage pathway for pyrimidine deoxyribonucleotide synthesis. The protein is Thymidine kinase (OPG101) of Procyon lotor (Raccoon).